A 284-amino-acid chain; its full sequence is RCS-specific HTH-type transcriptional activator RclR (284 aa).

A disulfide bridge connects residues Cys21 and Cys89. One can recognise an HTH araC/xylS-type domain in the interval Pro177–Arg278. DNA-binding regions (H-T-H motif) lie at residues Glu197–Ser218 and Val245–Phe268.

Oxydation of Cys-21 leads to partial activation of RclR, followed by the formation of an intramolecular disulfide bond between Cys-21 and Cys-89, which stabilizes the active form of RclR. Its function is as follows. Involved in reactive chlorine species (RCS) stress resistance. Up-regulates, in response to hypochlorous acid (HOCl), the expression of three genes essential for survival of RCS stress (rclA, rclB and rclC) and its own expression. This Escherichia coli (strain K12) protein is RCS-specific HTH-type transcriptional activator RclR (rclR).